A 154-amino-acid chain; its full sequence is Lipoprotein signal peptidase (154 aa).

Transmembrane regions (helical) follow at residues 55–75 and 85–105; these read GQFWLFYLITVIVVAAIVIYI and AGVGLGLMLGGAIGNFLDRVF. Active-site residues include aspartate 111 and aspartate 129. The chain crosses the membrane as a helical span at residues 127–147; the sequence is VADSALTVGVILLFVHMFFFA.

The protein belongs to the peptidase A8 family.

It localises to the cell membrane. The catalysed reaction is Release of signal peptides from bacterial membrane prolipoproteins. Hydrolyzes -Xaa-Yaa-Zaa-|-(S,diacylglyceryl)Cys-, in which Xaa is hydrophobic (preferably Leu), and Yaa (Ala or Ser) and Zaa (Gly or Ala) have small, neutral side chains.. The protein operates within protein modification; lipoprotein biosynthesis (signal peptide cleavage). This protein specifically catalyzes the removal of signal peptides from prolipoproteins. The sequence is that of Lipoprotein signal peptidase from Geobacillus kaustophilus (strain HTA426).